Consider the following 962-residue polypeptide: Glycine dehydrogenase (decarboxylating) (962 aa).

The residue at position 709 (K709) is an N6-(pyridoxal phosphate)lysine.

Belongs to the GcvP family. In terms of assembly, the glycine cleavage system is composed of four proteins: P, T, L and H. Pyridoxal 5'-phosphate is required as a cofactor.

The catalysed reaction is N(6)-[(R)-lipoyl]-L-lysyl-[glycine-cleavage complex H protein] + glycine + H(+) = N(6)-[(R)-S(8)-aminomethyldihydrolipoyl]-L-lysyl-[glycine-cleavage complex H protein] + CO2. Functionally, the glycine cleavage system catalyzes the degradation of glycine. The P protein binds the alpha-amino group of glycine through its pyridoxal phosphate cofactor; CO(2) is released and the remaining methylamine moiety is then transferred to the lipoamide cofactor of the H protein. The chain is Glycine dehydrogenase (decarboxylating) from Shewanella sediminis (strain HAW-EB3).